The sequence spans 309 residues: 4-hydroxy-3-methylbut-2-enyl diphosphate reductase (309 aa).

Residue cysteine 12 participates in [4Fe-4S] cluster binding. (2E)-4-hydroxy-3-methylbut-2-enyl diphosphate is bound by residues histidine 43 and histidine 77. Dimethylallyl diphosphate contacts are provided by histidine 43 and histidine 77. Isopentenyl diphosphate-binding residues include histidine 43 and histidine 77. Cysteine 99 contacts [4Fe-4S] cluster. Histidine 127 provides a ligand contact to (2E)-4-hydroxy-3-methylbut-2-enyl diphosphate. Histidine 127 is a binding site for dimethylallyl diphosphate. Histidine 127 contacts isopentenyl diphosphate. Glutamate 129 functions as the Proton donor in the catalytic mechanism. Threonine 167 lines the (2E)-4-hydroxy-3-methylbut-2-enyl diphosphate pocket. Residue cysteine 197 participates in [4Fe-4S] cluster binding. (2E)-4-hydroxy-3-methylbut-2-enyl diphosphate-binding residues include serine 225, serine 226, asparagine 227, and serine 269. The dimethylallyl diphosphate site is built by serine 225, serine 226, asparagine 227, and serine 269. Serine 225, serine 226, asparagine 227, and serine 269 together coordinate isopentenyl diphosphate.

The protein belongs to the IspH family. The cofactor is [4Fe-4S] cluster.

It catalyses the reaction isopentenyl diphosphate + 2 oxidized [2Fe-2S]-[ferredoxin] + H2O = (2E)-4-hydroxy-3-methylbut-2-enyl diphosphate + 2 reduced [2Fe-2S]-[ferredoxin] + 2 H(+). The enzyme catalyses dimethylallyl diphosphate + 2 oxidized [2Fe-2S]-[ferredoxin] + H2O = (2E)-4-hydroxy-3-methylbut-2-enyl diphosphate + 2 reduced [2Fe-2S]-[ferredoxin] + 2 H(+). The protein operates within isoprenoid biosynthesis; dimethylallyl diphosphate biosynthesis; dimethylallyl diphosphate from (2E)-4-hydroxy-3-methylbutenyl diphosphate: step 1/1. It participates in isoprenoid biosynthesis; isopentenyl diphosphate biosynthesis via DXP pathway; isopentenyl diphosphate from 1-deoxy-D-xylulose 5-phosphate: step 6/6. In terms of biological role, catalyzes the conversion of 1-hydroxy-2-methyl-2-(E)-butenyl 4-diphosphate (HMBPP) into a mixture of isopentenyl diphosphate (IPP) and dimethylallyl diphosphate (DMAPP). Acts in the terminal step of the DOXP/MEP pathway for isoprenoid precursor biosynthesis. The polypeptide is 4-hydroxy-3-methylbut-2-enyl diphosphate reductase (Wolbachia pipientis wMel).